Consider the following 609-residue polypeptide: Oxidoreductase tpcJ (609 aa).

A signal peptide spans Met-1 to Ala-16. N-linked (GlcNAc...) asparagine glycosylation is found at Asn-63, Asn-107, Asn-113, Asn-240, Asn-283, Asn-471, and Asn-601. 3 consecutive Plastocyanin-like domains span residues Val-66–Ser-186, Pro-196–Glu-351, and Val-429–Lys-567.

Belongs to the multicopper oxidase family. Specifically expressed in conidia.

It functions in the pathway secondary metabolite biosynthesis. Oxidoreductase; part of the gene cluster that mediates the biosynthesis of trypacidin, a mycotoxin with antiprotozoal activity and that plays a role in the infection process. The pathway begins with the synthesis of atrochrysone thioester by the polyketide synthase (PKS) tpcC. The atrochrysone carboxyl ACP thioesterase tpcB then breaks the thioester bond and releases the atrochrysone carboxylic acid from tpcC. The decarboxylase tpcK converts atrochrysone carboxylic acid to atrochrysone which is further reduced into emodin anthrone. The next step is performed by the emodin anthrone oxygenase tpcL that catalyzes the oxidation of emodinanthrone to emodin. Emodin O-methyltransferase encoded by tpcA catalyzes methylation of the 8-hydroxy group of emodin to form questin. Ring cleavage of questin by questin oxidase tpcI leads to desmethylsulochrin via several intermediates including questin epoxide. Another methylation step catalyzed by tpcM leads to the formation of sulochrin which is further converted to monomethylsulfochrin by tpcH. Finally, the tpcJ catalyzes the conversion of monomethylsulfochrin to trypacidin. Trypacidin is toxic for human pulmonary and bronchial epithelial cells by initiating the intracellular formation of nitric oxide (NO) and hydrogen peroxide (H(2)O(2)), thus triggering host necrotic cell death. The trypacidin pathway is also able to produce endocrocin via a distinct route from the endocrocin Enc pathway. The sequence is that of Oxidoreductase tpcJ from Aspergillus fumigatus (strain ATCC MYA-4609 / CBS 101355 / FGSC A1100 / Af293) (Neosartorya fumigata).